A 235-amino-acid polypeptide reads, in one-letter code: tRNA (guanine-N(1)-)-methyltransferase (235 aa).

S-adenosyl-L-methionine-binding positions include glycine 112 and 132-137; that span reads LGDFVL.

It belongs to the RNA methyltransferase TrmD family. As to quaternary structure, homodimer.

It localises to the cytoplasm. The enzyme catalyses guanosine(37) in tRNA + S-adenosyl-L-methionine = N(1)-methylguanosine(37) in tRNA + S-adenosyl-L-homocysteine + H(+). Its function is as follows. Specifically methylates guanosine-37 in various tRNAs. This chain is tRNA (guanine-N(1)-)-methyltransferase, found in Acaryochloris marina (strain MBIC 11017).